The sequence spans 778 residues: Endonuclease MutS2 (778 aa).

328–335 (GPNTGGKT) contacts ATP. A Smr domain is found at 702 to 777 (LDLRGKRYEE…GSGATIVTFK (76 aa)).

Belongs to the DNA mismatch repair MutS family. MutS2 subfamily. As to quaternary structure, homodimer. Binds to stalled ribosomes, contacting rRNA.

Functionally, endonuclease that is involved in the suppression of homologous recombination and thus may have a key role in the control of bacterial genetic diversity. Its function is as follows. Acts as a ribosome collision sensor, splitting the ribosome into its 2 subunits. Detects stalled/collided 70S ribosomes which it binds and splits by an ATP-hydrolysis driven conformational change. Acts upstream of the ribosome quality control system (RQC), a ribosome-associated complex that mediates the extraction of incompletely synthesized nascent chains from stalled ribosomes and their subsequent degradation. Probably generates substrates for RQC. In Streptococcus pneumoniae (strain Hungary19A-6), this protein is Endonuclease MutS2.